A 118-amino-acid polypeptide reads, in one-letter code: Large ribosomal subunit protein uL24 (118 aa).

The protein belongs to the universal ribosomal protein uL24 family. In terms of assembly, part of the 50S ribosomal subunit.

Its function is as follows. One of two assembly initiator proteins, it binds directly to the 5'-end of the 23S rRNA, where it nucleates assembly of the 50S subunit. One of the proteins that surrounds the polypeptide exit tunnel on the outside of the subunit. This chain is Large ribosomal subunit protein uL24, found in Prochlorococcus marinus (strain AS9601).